The sequence spans 364 residues: Chorismate synthase (364 aa).

Arginine 48 lines the NADP(+) pocket. FMN contacts are provided by residues 131–133 (RSS), 243–244 (NA), glycine 288, 303–307 (KPTSS), and arginine 329.

The protein belongs to the chorismate synthase family. In terms of assembly, homotetramer. It depends on FMNH2 as a cofactor.

The enzyme catalyses 5-O-(1-carboxyvinyl)-3-phosphoshikimate = chorismate + phosphate. Its pathway is metabolic intermediate biosynthesis; chorismate biosynthesis; chorismate from D-erythrose 4-phosphate and phosphoenolpyruvate: step 7/7. Its function is as follows. Catalyzes the anti-1,4-elimination of the C-3 phosphate and the C-6 proR hydrogen from 5-enolpyruvylshikimate-3-phosphate (EPSP) to yield chorismate, which is the branch point compound that serves as the starting substrate for the three terminal pathways of aromatic amino acid biosynthesis. This reaction introduces a second double bond into the aromatic ring system. The chain is Chorismate synthase from Brucella anthropi (strain ATCC 49188 / DSM 6882 / CCUG 24695 / JCM 21032 / LMG 3331 / NBRC 15819 / NCTC 12168 / Alc 37) (Ochrobactrum anthropi).